We begin with the raw amino-acid sequence, 394 residues long: Protein arginine N-methyltransferase 8 (394 aa).

G2 carries N-myristoyl glycine lipidation. Positions M16–A40 are disordered. 2 short sequence motifs (SH3-binding) span residues P29–P42 and P53–R58. Positions P30–P39 are enriched in pro residues. R58 is subject to Omega-N-methylarginine; by autocatalysis. Position 73 is an asymmetric dimethylarginine; by autocatalysis (R73). Residues R73 to R394 form the SAM-dependent MTase PRMT-type domain. S-adenosyl-L-methionine contacts are provided by residues H86, R95, G119, G119–T122, E141, and E170. Active-site residues include E185 and E194.

Belongs to the class I-like SAM-binding methyltransferase superfamily. Protein arginine N-methyltransferase family. PRMT8 subfamily. Homodimer. Tetramer; individual homodimers associates to form a homotetramer. Homooctamer; individual homodimers associates to form a homooctamer and homooligomerization is required for proper localization to the cell membrane. Heterodimer with PRMT1; heterodimerization may recruit PRMT1 activity to the plasma membrane. Interacts with PRMT2 (via the SH3 domain). Interacts with FYN (via the SH3 domain). Interacts with EWS; independently of EWS methylation status. In terms of tissue distribution, brain-specific.

Its subcellular location is the cell membrane. It carries out the reaction L-arginyl-[protein] + S-adenosyl-L-methionine = N(omega)-methyl-L-arginyl-[protein] + S-adenosyl-L-homocysteine + H(+). The enzyme catalyses L-arginyl-[protein] + 2 S-adenosyl-L-methionine = N(omega),N(omega)-dimethyl-L-arginyl-[protein] + 2 S-adenosyl-L-homocysteine + 2 H(+). Its function is as follows. S-adenosyl-L-methionine-dependent and membrane-associated arginine methyltransferase that can both catalyze the formation of omega-N monomethylarginine (MMA) and asymmetrical dimethylarginine (aDMA) in proteins such as NIFK, myelin basic protein, histone H4, H2A and H2A/H2B dimer. Able to mono- and dimethylate EWS protein; however its precise role toward EWS remains unclear as it still interacts with fully methylated EWS. This Homo sapiens (Human) protein is Protein arginine N-methyltransferase 8.